Consider the following 669-residue polypeptide: Protein ENTREP3 (669 aa).

3 consecutive transmembrane segments (helical) span residues Leu34–Val54, Ser67–Trp87, and Phe91–Ala111. An N-linked (GlcNAc...) asparagine glycan is attached at Asn160. The helical transmembrane segment at Leu174–Val194 threads the bilayer. 2 positions are modified to phosphoserine: Ser359 and Ser390. 3 disordered regions span residues Phe387 to Ala420, Pro445 to Ser502, and Arg550 to Thr571. Positions Ala399–Pro408 are enriched in low complexity. Position 494 is a phosphoserine (Ser494). Ser575 carries the phosphoserine modification. The disordered stretch occupies residues Arg597–Glu624.

The protein belongs to the ENTREP family. In terms of assembly, may interact with WWOX.

It is found in the membrane. This Mus musculus (Mouse) protein is Protein ENTREP3.